Reading from the N-terminus, the 406-residue chain is Acetylornithine/succinyldiaminopimelate aminotransferase (406 aa).

Pyridoxal 5'-phosphate is bound by residues 108–109 (GT) and Phe141. Residue Arg144 participates in N(2)-acetyl-L-ornithine binding. Residue 226–229 (DEVQ) coordinates pyridoxal 5'-phosphate. At Lys255 the chain carries N6-(pyridoxal phosphate)lysine. Ser283 contacts N(2)-acetyl-L-ornithine. Thr284 provides a ligand contact to pyridoxal 5'-phosphate.

It belongs to the class-III pyridoxal-phosphate-dependent aminotransferase family. ArgD subfamily. As to quaternary structure, homodimer. Requires pyridoxal 5'-phosphate as cofactor.

The protein localises to the cytoplasm. It catalyses the reaction N(2)-acetyl-L-ornithine + 2-oxoglutarate = N-acetyl-L-glutamate 5-semialdehyde + L-glutamate. The catalysed reaction is N-succinyl-(2S,6S)-2,6-diaminopimelate + 2-oxoglutarate = (S)-2-succinylamino-6-oxoheptanedioate + L-glutamate. Its pathway is amino-acid biosynthesis; L-arginine biosynthesis; N(2)-acetyl-L-ornithine from L-glutamate: step 4/4. It functions in the pathway amino-acid biosynthesis; L-lysine biosynthesis via DAP pathway; LL-2,6-diaminopimelate from (S)-tetrahydrodipicolinate (succinylase route): step 2/3. Involved in both the arginine and lysine biosynthetic pathways. The sequence is that of Acetylornithine/succinyldiaminopimelate aminotransferase from Escherichia coli (strain K12).